A 54-amino-acid chain; its full sequence is MSAAVWQDGEDIILKLYIQPKASRDKIVGLHGEELKIAITAPPVDGKANAHLTK.

Belongs to the UPF0235 family.

The polypeptide is UPF0235 protein in proC 3'region (Vibrio alginolyticus).